The following is a 326-amino-acid chain: JNK1/MAPK8-associated membrane protein homolog (326 aa).

The Lumenal segment spans residues 1 to 71; the sequence is MSSLSGHAST…CESCDTPLQP (71 aa). A glycan (N-linked (GlcNAc...) asparagine) is linked at N27. A helical transmembrane segment spans residues 72–92; sequence YDWMYLLFIALLPLLLHMQFI. The Cytoplasmic portion of the chain corresponds to 93 to 108; that stretch reads RIARKYCRTRYYEVSE. The helical transmembrane segment at 109 to 129 threads the bilayer; the sequence is YLCVILENVIACVIAVLIYPP. The Lumenal segment spans residues 130 to 166; that stretch reads RFTFFLNGCSKTDIKEWYPACYNPRIGYTKTMRCTYE. A helical membrane pass occupies residues 167 to 187; that stretch reads VVFPLYSITFIHHLILIGSIL. Over 188–208 the chain is Cytoplasmic; the sequence is VLRSTLYCVLLYKTYNGKPFY. 2 consecutive transmembrane segments (helical) span residues 209-229 and 230-250; these read AAIV…GVVF and YTFP…HLAL. Residues 251–269 lie on the Cytoplasmic side of the membrane; sequence EGKRPLKEMIVRIATSPTH. The chain crosses the membrane as a helical span at residues 270–290; sequence LIFLSITMLMLSFGVIAIIAP. Residues 291 to 296 lie on the Lumenal side of the membrane; the sequence is LDIPYR. The chain crosses the membrane as a helical span at residues 297–317; that stretch reads WSFLCIVPVPFIFYMATIPFS. The Cytoplasmic segment spans residues 318-326; sequence NPTTTMRLS.

It is found in the endoplasmic reticulum membrane. Functionally, facilitates degradation of misfolded endoplasmic reticulum (ER) proteins through the recruitment of components of the proteasome and endoplasmic reticulum-associated degradation (ERAD) system. Involved in ER stress response. This Caenorhabditis elegans protein is JNK1/MAPK8-associated membrane protein homolog.